Here is an 846-residue protein sequence, read N- to C-terminus: Inactive cap-specific mRNA (nucleoside-2'-O-)-methyltransferase 1B (846 aa).

The interval 30-50 (DDEDDFVDDPSPTEQKTKAEK) is disordered. The G-patch domain maps to 44 to 90 (QKTKAEKKMERMGYKAGEGLGKNKQGIQEPIAISFREGKAGLGHEQW). In terms of domain architecture, RrmJ-type SAM-dependent 2'-O-MTase spans 184 to 413 (FFLNRSAMKT…ERFVVCKGLR (230 aa)).

This chain is Inactive cap-specific mRNA (nucleoside-2'-O-)-methyltransferase 1B, found in Caenorhabditis briggsae.